Consider the following 351-residue polypeptide: Phospho-N-acetylmuramoyl-pentapeptide-transferase (351 aa).

The next 10 membrane-spanning stretches (helical) occupy residues 3-23, 51-71, 76-96, 113-133, 152-172, 181-201, 223-243, 250-270, 275-295, and 329-349; these read GIIA…PPLI, TMGG…AHAV, PTVS…VGFL, GAKM…VTMF, FGPP…IVAT, GLDG…VIIG, PLDL…FLWF, IFMG…LAIT, LLLL…IIQV, and FWII…LEWM.

The protein belongs to the glycosyltransferase 4 family. MraY subfamily. Mg(2+) is required as a cofactor.

It is found in the cell membrane. The catalysed reaction is UDP-N-acetyl-alpha-D-muramoyl-L-alanyl-gamma-D-glutamyl-meso-2,6-diaminopimeloyl-D-alanyl-D-alanine + di-trans,octa-cis-undecaprenyl phosphate = di-trans,octa-cis-undecaprenyl diphospho-N-acetyl-alpha-D-muramoyl-L-alanyl-D-glutamyl-meso-2,6-diaminopimeloyl-D-alanyl-D-alanine + UMP. The protein operates within cell wall biogenesis; peptidoglycan biosynthesis. In terms of biological role, catalyzes the initial step of the lipid cycle reactions in the biosynthesis of the cell wall peptidoglycan: transfers peptidoglycan precursor phospho-MurNAc-pentapeptide from UDP-MurNAc-pentapeptide onto the lipid carrier undecaprenyl phosphate, yielding undecaprenyl-pyrophosphoryl-MurNAc-pentapeptide, known as lipid I. This chain is Phospho-N-acetylmuramoyl-pentapeptide-transferase, found in Thermobifida fusca (strain YX).